Here is a 524-residue protein sequence, read N- to C-terminus: Protein tweety homolog 3 (524 aa).

The Extracellular portion of the chain corresponds to 1-42 (MAGVSYAAPWWVSLLHRLPHFDLRWEATSSQFRPEDADYQQA). A helical membrane pass occupies residues 43–63 (LLLLGATALACLALDLLFLLF). Residues 64-86 (YSFWLCCRRRKTDEHLDADCCCT) lie on the Cytoplasmic side of the membrane. The chain crosses the membrane as a helical span at residues 87–107 (AWCVIITTLVCSAGIAVGFYG). Over 108–211 (NGETSDGIHR…VDLYDWYRWL (104 aa)) the chain is Extracellular. Ca(2+) contacts are provided by Glu110 and Asp113. N-linked (GlcNAc...) asparagine glycosylation is found at Asn126 and Asn144. Residues 212–232 (GYLGLLLLDVIICLLVLVGLI) traverse the membrane as a helical segment. At 233-236 (RSSK) the chain is on the cytoplasmic side. A helical membrane pass occupies residues 237 to 257 (GILVGVCLLGVLALVISWGAL). Over 258–386 (GLELAVSVGS…LTGFCYDGVE (129 aa)) the chain is Extracellular. Disulfide bonds link Cys271/Cys381 and Cys299/Cys366. N-linked (GlcNAc...) asparagine glycosylation occurs at Asn351. Residues 387-407 (GLIYLALFSFVTALMFSSIVC) form a helical membrane-spanning segment. The Cytoplasmic portion of the chain corresponds to 408-524 (SIPHTWQQKR…PRPDSSGSGH (117 aa)). Disordered regions lie at residues 413–435 (WQQKRGPDDDGEEETAPGPRQAH) and 485–524 (RCENTPLIGRESPPPSYTSSMRAKYLATSQPRPDSSGSGH). Residue Ser496 is modified to Phosphoserine. Positions 498–501 (PPSY) match the PY-motif; mediates interaction with NEDD4L motif. Over residues 501 to 524 (YTSSMRAKYLATSQPRPDSSGSGH) the composition is skewed to polar residues. Phosphoserine occurs at positions 504 and 522.

It belongs to the tweety family. In terms of assembly, homotetramer; disulfide-linked. Forms cis-homodimers in the presence of Ca(2+). Interacts with NEDD4L. Post-translationally, ubiquitinated by NEDD4L. In terms of processing, N-glycosylated. Expressed in excitable tissues. Expressed in the brain, heart, skeletal muscle, colon, spleen, kidney and peripheral blood leukocytes. Also expressed in fat, the pancreas, thymus, and uterus.

It localises to the cell membrane. The enzyme catalyses chloride(in) = chloride(out). It carries out the reaction L-glutamate(out) = L-glutamate(in). Inhibited by (4-[(2-butyl-6,7-dichloro-2- cyclopentyl-2,3-dihydro-1-oxo-1H-inden-5-yl)oxy]butanoic acid), genistein and PD98059 (MEK1 inhibitor). Its function is as follows. Calcium-independent, swelling-dependent volume-regulated anion channel (VRAC-swell) which plays a pivotal role in the process of regulatory volume decrease (RVD) in the brain through the efflux of anions like chloride and organic osmolytes like glutamate. Probable large-conductance Ca(2+)-activated chloride channel. The sequence is that of Protein tweety homolog 3 (Ttyh3) from Mus musculus (Mouse).